A 53-amino-acid chain; its full sequence is uncharacterized protein (53 aa).

This is an uncharacterized protein from Haemophilus influenzae (strain ATCC 51907 / DSM 11121 / KW20 / Rd).